Consider the following 170-residue polypeptide: Peptidyl-prolyl cis-trans isomerase ESS1 (170 aa).

In terms of domain architecture, WW spans 9–43 (TGLPTPWTVRYSKSKKREYFFNPETKHSQWEEPEG). A disordered region spans residues 30–53 (NPETKHSQWEEPEGTNKDQLHKHL). Positions 32-53 (ETKHSQWEEPEGTNKDQLHKHL) are enriched in basic and acidic residues. The region spanning 57 to 170 (PVRVRCLHIL…SGVHVIKRVG (114 aa)) is the PpiC domain. Ser161 is subject to Phosphoserine.

This sequence belongs to the PpiC/parvulin rotamase family. Interacts with the RNA polymerase II largest subunit (RPB1) and with the SIN1-RDP3 HDAC subunit SIN3.

Its subcellular location is the cytoplasm. It localises to the nucleus. The catalysed reaction is [protein]-peptidylproline (omega=180) = [protein]-peptidylproline (omega=0). With respect to regulation, inhibited by 5-hydroxy-1,4-naphthoquinone (juglone), but not by FK506 or cyclosporin A. In terms of biological role, essential PPIase specific for phosphoserine and phosphothreonine N-terminal to the proline residue. Required for efficient pre-mRNA 3'-end processing and transcription termination, probably by inducing conformational changes by proline-directed isomerization in the C-terminal domain (CTD) of RPB1, thereby altering cofactor binding with the RNA polymerase II transcription complex. Also targets the SIN3-RPD3 histone deacetylase complex (HDAC). The sequence is that of Peptidyl-prolyl cis-trans isomerase ESS1 (ESS1) from Saccharomyces cerevisiae (strain ATCC 204508 / S288c) (Baker's yeast).